The sequence spans 251 residues: MKLYSFQEHLLEFKIRLLRIFTAFIIIFAICYYFSDYIYSFLLEPLAKLSGDTVRNIIYTGLTEAFFTYIKLSAFTAFTIIIPIIALECYLFISPGLYRHEKKIIAFILFMSPILFWCGSIFVFYFVMPKAWNFFLSFEKRDMIVPIILEARISEYLNLVIHLIIAFGIAFQLPIVIIVLNILKIVKTQTLKKKRRIAVVINFIIAGILTPPDILSQFALAIPLLLLYETSIIICNFIETPRTLNVKYQMD.

6 helical membrane passes run 23-43 (AFIIIFAICYYFSDYIYSFLL), 73-93 (SAFTAFTIIIPIIALECYLFI), 104-124 (IIAFILFMSPILFWCGSIFVF), 159-179 (LVIHLIIAFGIAFQLPIVIIV), 197-217 (IAVVINFIIAGILTPPDILSQ), and 218-238 (FALAIPLLLLYETSIIICNFI).

It belongs to the TatC family. In terms of assembly, the Tat system comprises two distinct complexes: a TatABC complex, containing multiple copies of TatA, TatB and TatC subunits, and a separate TatA complex, containing only TatA subunits. Substrates initially bind to the TatABC complex, which probably triggers association of the separate TatA complex to form the active translocon.

Its subcellular location is the cell inner membrane. Part of the twin-arginine translocation (Tat) system that transports large folded proteins containing a characteristic twin-arginine motif in their signal peptide across membranes. Together with TatB, TatC is part of a receptor directly interacting with Tat signal peptides. This Rickettsia prowazekii (strain Madrid E) protein is Sec-independent protein translocase protein TatC.